The chain runs to 493 residues: Neisserial heparin binding antigen (493 aa).

The first 22 residues, 1–22, serve as a signal peptide directing secretion; that stretch reads MKEMMMFKRSVIAMACIFALSA. C23 carries the N-palmitoyl cysteine lipid modification. C23 carries S-diacylglycerol cysteine lipidation. The interval 27-206 is disordered; sequence GGGSPDVKSA…NPAPANGGSN (180 aa). Residues 48–58 show a composition bias toward basic and acidic residues; the sequence is SEKETEAKEDA. The span at 59-75 shows a compositional bias: low complexity; the sequence is PQAGSQGQGAPSAQGSQ. Composition is skewed to polar residues over residues 106–123 and 132–147; these read DMPQNAAGTDSSTPNHTP and MENQATDAGESSQPAN. A compositionally biased stretch (low complexity) spans 165–188; it reads AGGQNAGNTAAQGANQAGNNQAAG. The Arg-rich motif motif lies at 301-311; the sequence is RFRRSARSRRS.

It belongs to the NHBA family. The C-terminal beta-barrel forms a monomer. Post-translationally, cleaved in vivo by the Neisserial phase-variable autotransporter/serine protease NalP to give 2 fragments. The N-terminus remains in the cell outer membrane while the C-terminus (beginning on Ser-298) is soluble; this soluble fragment is called C2. Cleaved in vitro by human lactoferrin (LTF, between Arg-310 and Ser-311), this fragment is called C1. Recombinant and cell surface protein is cleaved by human saliva kallikrein (KLK1) between Ser-308 and Arg-309; in saliva kallikrein is more active on NHBA than lactoferrin. Human plasma kallikrein (KLKB1) cleaves in a similar manner to KLK1.

The protein localises to the cell outer membrane. A major human immunogenic protein detected in patients recovering from meningitidis, where it induces bactericidal antibodies. Binds human cells, heparin and heparan sulfate proteoglycan in vitro via the Arg-rich motif. Heparin-binding to this protein protects bacteria against killing by bactericidal antibodies (serum killing). The bacteria binds a number of human extracellular sialyated and/or sulfated glycans via this protein, including chondroitin sulfate, heparin and ganglioside GT3. Whole protein binds DNA. In terms of biological role, plays a role in extracellular-DNA (eDNA) mediated biofilm formation. In some strains (including cc32 strain H44/76 but not cc11 strain B16B6) eDNA stimulates biofilm formation. When NHBA is not processed by NalP, biofilm formation increases. This is probably because the number of positively charged, NHBA- and IgA-derived DNA-binding peptides on the cell surface rises, resulting in increased DNA-binding peptides and increased biofilm formation. In Neisseria meningitidis serogroup B / serotype 15 (strain H44/76), this protein is Neisserial heparin binding antigen.